The following is a 232-amino-acid chain: Octanoyltransferase (232 aa).

Residues 43-231 (LPTSNYLLFV…HLTHLFEAEI (189 aa)) form the BPL/LPL catalytic domain. Substrate-binding positions include 88–95 (RGGDITYH), 160–162 (AMG), and 173–175 (GFA). C191 functions as the Acyl-thioester intermediate in the catalytic mechanism.

This sequence belongs to the LipB family.

The protein resides in the cytoplasm. It catalyses the reaction octanoyl-[ACP] + L-lysyl-[protein] = N(6)-octanoyl-L-lysyl-[protein] + holo-[ACP] + H(+). It functions in the pathway protein modification; protein lipoylation via endogenous pathway; protein N(6)-(lipoyl)lysine from octanoyl-[acyl-carrier-protein]: step 1/2. Catalyzes the transfer of endogenously produced octanoic acid from octanoyl-acyl-carrier-protein onto the lipoyl domains of lipoate-dependent enzymes. Lipoyl-ACP can also act as a substrate although octanoyl-ACP is likely to be the physiological substrate. The chain is Octanoyltransferase from Flavobacterium johnsoniae (strain ATCC 17061 / DSM 2064 / JCM 8514 / BCRC 14874 / CCUG 350202 / NBRC 14942 / NCIMB 11054 / UW101) (Cytophaga johnsonae).